The sequence spans 220 residues: UPF0319 protein YccT (220 aa).

Residues 1–20 (MKAGTLTLLIALCLPISVSA) form the signal peptide.

Belongs to the UPF0319 family.

This Escherichia fergusonii (strain ATCC 35469 / DSM 13698 / CCUG 18766 / IAM 14443 / JCM 21226 / LMG 7866 / NBRC 102419 / NCTC 12128 / CDC 0568-73) protein is UPF0319 protein YccT.